The primary structure comprises 507 residues: MLNADLKQQLQQLLELMEGDVEFVASLGSDDKSNELKELLNEIAEMSAHITITEKSLKRTPSFSVNRPGEETGITFAGIPLGHEFNSLVLAILQVSGRAPKEKQSIIDQIKGLEGPFHFETFVSLTCQKCPDVVQALNLMSVINPNITHTMIDGAVFREESENIMAVPAVFLDGQEFGNGRMTVQDILTKLGSTQDASEFNDKDPYDVLIVGGGPASGSAAIYTARKGLRTGIVADRIGGQVNDTAGIENFITVKETTGSEFSSNLAEHIAQYDIDTMTGIRATNIEKTDSAIRVTLENDAVLESKTVIISTGASWRKLNIPGEDRLINKGVAFCPHCDGPLFENKDVAVIGGGNSGVEAAIDLAGIVKHVTLFEYASELKADSVLQERLRSLPNVDIKTSAKTTEVIGDDYVTGISYEDMTTGESQVVNLDGIFVQIGLVPNTSWLQNAVELNERGEVMINRDNATNVPGIFAAGDVTDQKNKQIIISMGAGANAALNAFDYIIRN.

207-222 (DVLIVGGGPASGSAAI) provides a ligand contact to FAD. Residues C335 and C338 are joined by a disulfide bond. 347–361 (DVAVIGGGNSGVEAA) contacts NAD(+). Residue 467 to 477 (TNVPGIFAAGD) coordinates FAD.

The protein belongs to the class-II pyridine nucleotide-disulfide oxidoreductase family. As to quaternary structure, homodimer. Requires FAD as cofactor.

Its function is as follows. Serves to protect the cell against DNA damage by alkyl hydroperoxides. It can use either NADH or NADPH as electron donor for direct reduction of redox dyes or of alkyl hydroperoxides when combined with the AhpC protein. The sequence is that of Alkyl hydroperoxide reductase subunit F (ahpF) from Staphylococcus epidermidis (strain ATCC 12228 / FDA PCI 1200).